A 1378-amino-acid chain; its full sequence is MTNCEKDEEFVCISCVEEVRYSFVSHLSEALRRKGINNVVVDVDIDDLLFKESQAKIEKAGVSVMVLPGNCDPSEVWLDKFAKVLECQRNNKDQAVVSVLYGDSLLRDQWLSELDFRGLSRIHQSRKECSDSILVEEIVRDVYETHFYVGRIGIYSKLLEIENMVNKQPIGIRCVGIWGMPGIGKTTLAKAVFDQMSSAFDASCFIEDYDKSIHEKGLYCLLEEQLLPGNDATIMKLSSLRDRLNSKRVLVVLDDVCNALVAESFLEGFDWLGPGSLIIITSRDKQVFRLCGINQIYEVQGLNEKEARQLFLLSASIMEDMGEQNLHELSVRVISYANGNPLAISVYGRELKGKKKLSEMETAFLKLKRRPPFKIVDAFKSSYDTLSDNEKNIFLDIACFFQGENVNYVIQLLEGCGFFPHVEIDVLVDKCLVTISENRVWLHKLTQDIGREIINGETVQIERRRRLWEPWSIKYLLEYNEHKANGEPKTTFKRAQGSEEIEGLFLDTSNLRFDLQPSAFKNMLNLRLLKIYCSNPEVHPVINFPTGSLHSLPNELRLLHWENYPLKSLPQNFDPRHLVEINMPYSQLQKLWGGTKNLEMLRTIRLCHSQHLVDIDDLLKAENLEVIDLQGCTRLQNFPAAGRLLRLRVVNLSGCIKIKSVLEIPPNIEKLHLQGTGILALPVSTVKPNHRELVNFLTEIPGLSEASKLERLTSLLESNSSCQDLGKLICLELKDCSCLQSLPNMANLDLNVLDLSGCSSLNSIQGFPRFLKQLYLGGTAIREVPQLPQSLEILNAHGSCLRSLPNMANLEFLKVLDLSGCSELETIQGFPRNLKELYFAGTTLREVPQLPLSLEVLNAHGSDSEKLPMHYKFNNFFDLSQQVVNDFFLKALTYVKHIPRGYTQELINKAPTFSFSAPSHTNQNATFDLQPGSSVMTRLNHSWRNTLVGFGMLVEVAFPEDYCDATDVGISCVCRWSNKEGRSCRIERNFHCWAPGKVVPKVRKDHTFVFSDVNMRPSTGEGNDPDIWAGLVVFEFFPINQQTKCLNDRFTVTRCGVRVINVATGNTSLENISLVLSLDPVEVSGYEVLRVSYDDLQEMDKVLFLYIASLFNDEDVDFVAPLIAGIDLDVSSGLKVLADVSLISVSSNGEIVMHSLQRQMGKEILHGQSMLLSDCESSMTENLSDVPKKEKKHRESKVKKVVSIPAIDEGDLWTWRKYGQKDILGSRFPRGYYRCAYKFTHGCKATKQVQRSETDSNMLAITYLSEHNHPRPTKRKALADSTRSTSSSICSAITTSASSRVFQNKDEPNQPHLPSSSTPPRNAAVLFKMTDMEEFQDNMEVDNDVVDTRTLALFPEFQHQPEEEDPWSTFFDDYNFYF.

The TIR domain maps to 5 to 146 (EKDEEFVCIS…EIVRDVYETH (142 aa)). One can recognise an NB-ARC domain in the interval 170 to 421 (IGIRCVGIWG…LLEGCGFFPH (252 aa)). Position 179 to 186 (179 to 186 (GMPGIGKT)) interacts with ATP. LRR repeat units follow at residues 498 to 522 (SEEI…AFKN), 535 to 553 (NPEV…HSLP), 554 to 575 (NELR…NFDP), 577 to 598 (HLVE…TKNL), 621 to 646 (AENL…RLLR), 665 to 688 (PPNI…TVKP), 742 to 766 (LPNM…SIQG), 768 to 793 (PRFL…SLEI), and 831 to 854 (PRNL…PLSL). A Nuclear localization signal motif is present at residues 988–1005 (RNFHCWAPGKVVPKVRKD). The WRKY DNA-binding region spans 1204–1272 (IPAIDEGDLW…YLSEHNHPRP (69 aa)). Residues 1300 to 1321 (RVFQNKDEPNQPHLPSSSTPPR) are disordered.

Interacts with PopP2, a R.solanacearum type III effector.

The protein localises to the nucleus. It localises to the cytoplasm. Transcription factor. Interacts specifically with the W box (5'-(T)TGAC[CT]-3'), a frequently occurring elicitor-responsive cis-acting element. Also acts as a disease resistance protein involved in resistance to fungal and bacterial pathogens, including R.solanacearum, P.syringae pv. tomato and C.higginsianum. RRS1 mediated resistance depends on salicylic acid and NDR1 (AC O48915). The sequence is that of Disease resistance protein RRS1 from Arabidopsis thaliana (Mouse-ear cress).